Reading from the N-terminus, the 232-residue chain is Enolase-phosphatase E1 (232 aa).

Belongs to the HAD-like hydrolase superfamily. MasA/MtnC family. Monomer. The cofactor is Mg(2+).

The catalysed reaction is 5-methylsulfanyl-2,3-dioxopentyl phosphate + H2O = 1,2-dihydroxy-5-(methylsulfanyl)pent-1-en-3-one + phosphate. Its pathway is amino-acid biosynthesis; L-methionine biosynthesis via salvage pathway; L-methionine from S-methyl-5-thio-alpha-D-ribose 1-phosphate: step 3/6. The protein operates within amino-acid biosynthesis; L-methionine biosynthesis via salvage pathway; L-methionine from S-methyl-5-thio-alpha-D-ribose 1-phosphate: step 4/6. Functionally, bifunctional enzyme that catalyzes the enolization of 2,3-diketo-5-methylthiopentyl-1-phosphate (DK-MTP-1-P) into the intermediate 2-hydroxy-3-keto-5-methylthiopentenyl-1-phosphate (HK-MTPenyl-1-P), which is then dephosphorylated to form the acireductone 1,2-dihydroxy-3-keto-5-methylthiopentene (DHK-MTPene). The sequence is that of Enolase-phosphatase E1 from Xanthomonas oryzae pv. oryzae (strain KACC10331 / KXO85).